Reading from the N-terminus, the 679-residue chain is uncharacterized protein (679 aa).

12 helical membrane passes run 23–41 (YALR…AYYL), 46–65 (PYWA…GGVI), 72–90 (IAGS…GHTL), 94–113 (WLFL…ACAH), 120–142 (YAFQ…IVEI), 157–179 (IVGI…GTAL), 362–381 (WSGV…SIGA), 385–404 (SGPG…SIVA), 411–433 (SLLM…GLMV), 438–455 (LWQF…MQLL), 462–481 (LAGL…AVTN), and 496–515 (AKIV…RPGS).

It belongs to the aromatic acid exporter ArAE (TC 2.A.85) family.

It is found in the cell membrane. This is an uncharacterized protein from Salmonella typhimurium (strain LT2 / SGSC1412 / ATCC 700720).